Reading from the N-terminus, the 225-residue chain is Heptaprenylglyceryl phosphate synthase (225 aa).

Lys6 contributes to the sn-glycerol 1-phosphate binding site. Asp8 and Thr34 together coordinate Mg(2+). Sn-glycerol 1-phosphate-binding positions include 153 to 158, Gly183, and 203 to 204; these read YVEYSG and GN.

Belongs to the GGGP/HepGP synthase family. Group I subfamily. In terms of assembly, homodimer. Mg(2+) is required as a cofactor.

The enzyme catalyses sn-glycerol 1-phosphate + all-trans-heptaprenyl diphosphate = 3-heptaprenyl-sn-glycero-1-phosphate + diphosphate. The protein operates within membrane lipid metabolism; glycerophospholipid metabolism. Prenyltransferase that catalyzes in vivo the transfer of the heptaprenyl moiety of heptaprenyl pyrophosphate (HepPP; 35 carbon atoms) to the C3 hydroxyl of sn-glycerol-1-phosphate (G1P), producing heptaprenylglyceryl phosphate (HepGP). This reaction is an ether-bond-formation step in the biosynthesis of archaea-type G1P-based membrane lipids found in Bacillales. This is Heptaprenylglyceryl phosphate synthase from Listeria monocytogenes serotype 4a (strain HCC23).